The primary structure comprises 385 residues: MSSLFQTYGRWDIDIKKAKGTYVEDQNGKTYLDFIQGIAVSNLGHCHEAVTEAVKKQLDSVWHVSNLFQNSLQEQAAQKLAAHSAGDLVFFCNSGAEANEGAIKLARKATGKTKIITFLQSFHGRTYAGMAATGQDKIKTGFGPMLGGFHYLPYNDPSAFKALGEEGDIAAVMLETVQGEGGVNPASAEFLSAVQSFCKEKQALLIIDEIQTGIGRTGKGFAYEHFGLSPDIITVAKGLGNGFPVGAVIGKKQLGEAFTPGSHGTTFGGNMLAMAAVNATLQIVFQPDFLQEAADKGAFLKEQLEAELKSPFVKQIRGKGLMLGIECDGPVADIIAELQTLGLLVLPAGPNVIRLLPPLTVTKDEIAEAVSKLKQAIAHHSAVNQ.

Residues 95-96 (GA) and F122 each bind pyridoxal 5'-phosphate. R125 lines the N(2)-acetyl-L-ornithine pocket. A pyridoxal 5'-phosphate-binding site is contributed by 208–211 (DEIQ). Residue K237 is modified to N6-(pyridoxal phosphate)lysine. T265 is a N(2)-acetyl-L-ornithine binding site. T266 is a binding site for pyridoxal 5'-phosphate.

The protein belongs to the class-III pyridoxal-phosphate-dependent aminotransferase family. ArgD subfamily. As to quaternary structure, homodimer. Pyridoxal 5'-phosphate serves as cofactor.

It localises to the cytoplasm. The catalysed reaction is N(2)-acetyl-L-ornithine + 2-oxoglutarate = N-acetyl-L-glutamate 5-semialdehyde + L-glutamate. Its pathway is amino-acid biosynthesis; L-arginine biosynthesis; N(2)-acetyl-L-ornithine from L-glutamate: step 4/4. The polypeptide is Acetylornithine aminotransferase (Bacillus subtilis (strain 168)).